Consider the following 370-residue polypeptide: Calcium/calmodulin-dependent protein kinase type 1 (370 aa).

In terms of domain architecture, Protein kinase spans 20 to 276; sequence YDFRDVLGTG…CEQALQHPWI (257 aa). ATP is bound by residues 26-34 and Lys49; that span reads LGTGAFSEV. Lys59 is covalently cross-linked (Glycyl lysine isopeptide (Lys-Gly) (interchain with G-Cter in ubiquitin)). Asp141 serves as the catalytic Proton acceptor. At Thr177 the chain carries Phosphothreonine; by CaMKK1 and CaMKK2. An autoinhibitory domain region spans residues 276–316; sequence IAGDTALDKNIHQSVSEQIKKNFAKSKWKQAFNATAVVRHM. The segment at 296-317 is calmodulin-binding; sequence KNFAKSKWKQAFNATAVVRHMR. Positions 315-321 match the Nuclear export signal motif; sequence HMRKLQL. Position 363 is a phosphoserine (Ser363).

This sequence belongs to the protein kinase superfamily. CAMK Ser/Thr protein kinase family. CaMK subfamily. As to quaternary structure, monomer. Interacts with XPO1. Interacts with MARK2, ARHGEF7/BETAPIX and GIT1. In terms of processing, phosphorylated by CaMKK1 and CaMKK2 on Thr-177. Polybiquitinated by the E3 ubiquitin-protein ligase complex SCF(FBXL12), leading to proteasomal degradation. In terms of tissue distribution, widely expressed. Expressed in cells of the zona glomerulosa of the adrenal cortex.

It is found in the cytoplasm. It localises to the nucleus. It catalyses the reaction L-seryl-[protein] + ATP = O-phospho-L-seryl-[protein] + ADP + H(+). The catalysed reaction is L-threonyl-[protein] + ATP = O-phospho-L-threonyl-[protein] + ADP + H(+). Activated by Ca(2+)/calmodulin. Binding of calmodulin results in conformational change that relieves intrasteric autoinhibition and allows phosphorylation of Thr-177 within the activation loop by CaMKK1 or CaMKK2. Phosphorylation of Thr-177 results in several fold increase in total activity. Unlike CaMK4, is unable to exhibit autonomous activity after Ca(2+)/calmodulin activation. In terms of biological role, calcium/calmodulin-dependent protein kinase that operates in the calcium-triggered CaMKK-CaMK1 signaling cascade and, upon calcium influx, regulates transcription activators activity, cell cycle, hormone production, cell differentiation, actin filament organization and neurite outgrowth. Recognizes the substrate consensus sequence [MVLIF]-x-R-x(2)-[ST]-x(3)-[MVLIF]. Regulates axonal extension and growth cone motility in hippocampal and cerebellar nerve cells. Upon NMDA receptor-mediated Ca(2+) elevation, promotes dendritic growth in hippocampal neurons and is essential in synapses for full long-term potentiation (LTP) and ERK2-dependent translational activation. Downstream of NMDA receptors, promotes the formation of spines and synapses in hippocampal neurons by phosphorylating ARHGEF7/BETAPIX on 'Ser-694', which results in the enhancement of ARHGEF7 activity and activation of RAC1. Promotes neuronal differentiation and neurite outgrowth by activation and phosphorylation of MARK2 on 'Ser-91', 'Ser-92', 'Ser-93' and 'Ser-294'. Promotes nuclear export of HDAC5 and binding to 14-3-3 by phosphorylation of 'Ser-259' and 'Ser-498' in the regulation of muscle cell differentiation. Regulates NUMB-mediated endocytosis by phosphorylation of NUMB on 'Ser-276' and 'Ser-295'. Involved in the regulation of basal and estrogen-stimulated migration of medulloblastoma cells through ARHGEF7/BETAPIX phosphorylation. Is required for proper activation of cyclin-D1/CDK4 complex during G1 progression in diploid fibroblasts. Plays a role in K(+) and ANG2-mediated regulation of the aldosterone synthase (CYP11B2) to produce aldosterone in the adrenal cortex. Phosphorylates EIF4G3/eIF4GII. In vitro phosphorylates CREB1, ATF1, CFTR, MYL9 and SYN1/synapsin I. This is Calcium/calmodulin-dependent protein kinase type 1 (CAMK1) from Homo sapiens (Human).